Reading from the N-terminus, the 211-residue chain is Ribosomal RNA large subunit methyltransferase E (211 aa).

The S-adenosyl-L-methionine site is built by Gly-60, Trp-62, Asp-85, Asp-101, and Asp-126. Lys-166 functions as the Proton acceptor in the catalytic mechanism.

Belongs to the class I-like SAM-binding methyltransferase superfamily. RNA methyltransferase RlmE family.

The protein localises to the cytoplasm. The catalysed reaction is uridine(2552) in 23S rRNA + S-adenosyl-L-methionine = 2'-O-methyluridine(2552) in 23S rRNA + S-adenosyl-L-homocysteine + H(+). Its function is as follows. Specifically methylates the uridine in position 2552 of 23S rRNA at the 2'-O position of the ribose in the fully assembled 50S ribosomal subunit. In Bordetella petrii (strain ATCC BAA-461 / DSM 12804 / CCUG 43448), this protein is Ribosomal RNA large subunit methyltransferase E.